The sequence spans 375 residues: Serpin B5 (375 aa).

5 N-linked (GlcNAc...) asparagine glycosylation sites follow: Asn99, Asn133, Asn188, Asn298, and Asn361.

Belongs to the serpin family. Ov-serpin subfamily. Interacts with IRF6.

It localises to the secreted. It is found in the extracellular space. In terms of biological role, tumor suppressor. It blocks the growth, invasion, and metastatic properties of mammary tumors. As it does not undergo the S (stressed) to R (relaxed) conformational transition characteristic of active serpins, it exhibits no serine protease inhibitory activity. The chain is Serpin B5 (Serpinb5) from Rattus norvegicus (Rat).